The chain runs to 100 residues: Small ribosomal subunit protein uS14c (100 aa).

It belongs to the universal ribosomal protein uS14 family. Part of the 30S ribosomal subunit.

Its subcellular location is the plastid. The protein localises to the chloroplast. Functionally, binds 16S rRNA, required for the assembly of 30S particles. This Liriodendron tulipifera (Tuliptree) protein is Small ribosomal subunit protein uS14c.